A 394-amino-acid chain; its full sequence is Elongation factor Tu (394 aa).

The tr-type G domain maps to 10 to 204; that stretch reads KPHVNVGTIG…ALDRYIPTPE (195 aa). The tract at residues 19-26 is G1; that stretch reads GHVDHGKT. 19–26 contacts GTP; the sequence is GHVDHGKT. A Mg(2+)-binding site is contributed by Thr26. Residues 60 to 64 are G2; that stretch reads GITIN. Residues 81–84 form a G3 region; it reads DCPG. Residues 81 to 85 and 136 to 139 each bind GTP; these read DCPGH and NKCD. A G4 region spans residues 136–139; it reads NKCD. The tract at residues 174-176 is G5; it reads SAL.

This sequence belongs to the TRAFAC class translation factor GTPase superfamily. Classic translation factor GTPase family. EF-Tu/EF-1A subfamily. Monomer.

The protein localises to the cytoplasm. It catalyses the reaction GTP + H2O = GDP + phosphate + H(+). Its function is as follows. GTP hydrolase that promotes the GTP-dependent binding of aminoacyl-tRNA to the A-site of ribosomes during protein biosynthesis. This is Elongation factor Tu from Neisseria gonorrhoeae.